The primary structure comprises 338 residues: MQIWPHKHIHTLANFSIKDYESVFELANRFDALKNAGTKKIPALQGTLVTSLFFEASTRTKNSFELAAKRLSADVQTFAPSSSSLTKGETIIDTAITYSAMGADTLVIRHSSSYITFEIAKKLDAINSKTSVLNAGDGLHSHPSQGLLDIYTLIKFFSPQTLNPEVLNSKKILIIGDVNHSRVARSNLWALSAFGADIILCGPKALIPDEFINFLKTPAPNQTEDPVKSRGSITISRSLEESIKTADAIIVLRLQKERMMENLLSSIDSYSLDYGLTPEKLSLNNKEIPILHPGPINRDIEISSKVVDRYPNCLINNQVANGIPIRMALLYLLQKHNK.

Carbamoyl phosphate-binding residues include R59 and T60. K87 serves as a coordination point for L-aspartate. The carbamoyl phosphate site is built by R109, H142, and Q145. L-aspartate-binding residues include R182 and R253. Carbamoyl phosphate is bound by residues G294 and P295.

This sequence belongs to the aspartate/ornithine carbamoyltransferase superfamily. ATCase family. Heterododecamer (2C3:3R2) of six catalytic PyrB chains organized as two trimers (C3), and six regulatory PyrI chains organized as three dimers (R2).

The catalysed reaction is carbamoyl phosphate + L-aspartate = N-carbamoyl-L-aspartate + phosphate + H(+). It functions in the pathway pyrimidine metabolism; UMP biosynthesis via de novo pathway; (S)-dihydroorotate from bicarbonate: step 2/3. Catalyzes the condensation of carbamoyl phosphate and aspartate to form carbamoyl aspartate and inorganic phosphate, the committed step in the de novo pyrimidine nucleotide biosynthesis pathway. The protein is Aspartate carbamoyltransferase catalytic subunit of Prochlorococcus marinus (strain AS9601).